Here is a 353-residue protein sequence, read N- to C-terminus: Holliday junction branch migration complex subunit RuvB (353 aa).

A large ATPase domain (RuvB-L) region spans residues 4 to 185 (ADRLITATGG…FGIVQRLEFY (182 aa)). ATP contacts are provided by residues Ile24, Arg25, Gly66, Lys69, Thr70, Thr71, 132–134 (EDF), Arg175, Tyr185, and Arg222. Thr70 is a binding site for Mg(2+). Positions 186–256 (NIADLSTIVS…TADKALNLLD (71 aa)) are small ATPAse domain (RuvB-S). The tract at residues 259–353 (EHGFDHQDRR…DDFGDEPVDL (95 aa)) is head domain (RuvB-H). 3 residues coordinate DNA: Arg295, Arg314, and Arg319.

Belongs to the RuvB family. In terms of assembly, homohexamer. Forms an RuvA(8)-RuvB(12)-Holliday junction (HJ) complex. HJ DNA is sandwiched between 2 RuvA tetramers; dsDNA enters through RuvA and exits via RuvB. An RuvB hexamer assembles on each DNA strand where it exits the tetramer. Each RuvB hexamer is contacted by two RuvA subunits (via domain III) on 2 adjacent RuvB subunits; this complex drives branch migration. In the full resolvosome a probable DNA-RuvA(4)-RuvB(12)-RuvC(2) complex forms which resolves the HJ.

The protein resides in the cytoplasm. It carries out the reaction ATP + H2O = ADP + phosphate + H(+). The RuvA-RuvB-RuvC complex processes Holliday junction (HJ) DNA during genetic recombination and DNA repair, while the RuvA-RuvB complex plays an important role in the rescue of blocked DNA replication forks via replication fork reversal (RFR). RuvA specifically binds to HJ cruciform DNA, conferring on it an open structure. The RuvB hexamer acts as an ATP-dependent pump, pulling dsDNA into and through the RuvAB complex. RuvB forms 2 homohexamers on either side of HJ DNA bound by 1 or 2 RuvA tetramers; 4 subunits per hexamer contact DNA at a time. Coordinated motions by a converter formed by DNA-disengaged RuvB subunits stimulates ATP hydrolysis and nucleotide exchange. Immobilization of the converter enables RuvB to convert the ATP-contained energy into a lever motion, pulling 2 nucleotides of DNA out of the RuvA tetramer per ATP hydrolyzed, thus driving DNA branch migration. The RuvB motors rotate together with the DNA substrate, which together with the progressing nucleotide cycle form the mechanistic basis for DNA recombination by continuous HJ branch migration. Branch migration allows RuvC to scan DNA until it finds its consensus sequence, where it cleaves and resolves cruciform DNA. This chain is Holliday junction branch migration complex subunit RuvB, found in Pseudomonas syringae pv. syringae (strain B728a).